The sequence spans 63 residues: Cecropin (63 aa).

A signal peptide spans 1-23; that stretch reads MNFYKIFVFIALILALSVSQSEA. An Arginine amide modification is found at R62.

In terms of assembly, monomer. In terms of tissue distribution, hemolymph.

It is found in the secreted. Its function is as follows. Cecropins have lytic and antibacterial activity against several Gram-negative bacteria. The sequence is that of Cecropin from Glossina morsitans morsitans (Savannah tsetse fly).